The primary structure comprises 1014 residues: MFKAVNPRQNFPQMEEDILKLWQDKGVFKKSIENRRDGKRFTLYEGPPTANGRPGIHHVLSRVFKDVIPRYKVMKGYYAPRIGGWDTHGLPVELEVEKELGFTSKNDIEKYGIAEFNARCRSSVFKYVSEWNKLTERIAYWVDLDNAYITMDNNYIESGWWALKQMWDKGLVYQGHRVTPHCPRCGTSLSSHEVAQGYKDNTEDPSVFVKFEIAKESLAKAGLAKKWAYPADKPLYLLAWTTTPWTLPANTALAVSAADQYAILDMTDYYMILAKPRLSALKLAENPVAGECLGSDLSGLFYKPLFDPREFGIPVRNMQDNSETGVSEELLYPVITTSYVSMDDGTGIVHTAPAYGELDYESGVKYGLKFVHHVDLQGRITGSYPFAGKFVKEADKDISRNLKERGLMFRNERMHHTYPFCWRCDSPLIYYAKQSWYIRTTAVRDELIKGNQQINWYPEHIKDGRFGDWLENNIDWAFSRERYWGTPVPIWRCEKCGRTECVGGIDELKAKPNFKGMQEKLDIHRPYVDEWTYDCDKCGGNMKRVTEVMDCWYDSGAMPVAQYHYPFEPESRSIAKDGRFPADYICEAVDQTRGWFYSLHAISTLIFNRPCYQNVICLGHILDERGEKMSKSRNNVIQPATVLDKYGADAVRWYFYTAAPPGNARRFSEKLVGEVTRQFLLMLWNVYSFFVTYANIDSFTPSEKYLEGEVPELDRWILSELNQLVLDVDKGLDNYDPTQAGRRIEDFVGYLSNWYVRRSRRRFWKSENDADKLSAYQALYTCLVTLSRLLAPFTPFVAEELYQNLVLSADPSALESVHLTDFPVADTALIDEQLDNEIRLVMKVSSMGRSARSKAALKVRQPLAEVRVVLASAGERTGLMRLAEQVLEELNVKALAVEEPGTVIPEKNYAASTEGAYTVAVYTGLSPELLAEGTAREIVHRLQTMRKSAGFEIADYINTHYQADEYLDSVIRMHSEYIKKETLSNQLIKGNAPEGAYAESLDIDGHSLSLWVAR.

The 'HIGH' region motif lies at 48–58 (PTANGRPGIHH). The 'KMSKS' region signature appears at 628-632 (KMSKS). Lys-631 lines the ATP pocket.

Belongs to the class-I aminoacyl-tRNA synthetase family. IleS type 2 subfamily. As to quaternary structure, monomer. It depends on Zn(2+) as a cofactor.

Its subcellular location is the cytoplasm. It catalyses the reaction tRNA(Ile) + L-isoleucine + ATP = L-isoleucyl-tRNA(Ile) + AMP + diphosphate. Functionally, catalyzes the attachment of isoleucine to tRNA(Ile). As IleRS can inadvertently accommodate and process structurally similar amino acids such as valine, to avoid such errors it has two additional distinct tRNA(Ile)-dependent editing activities. One activity is designated as 'pretransfer' editing and involves the hydrolysis of activated Val-AMP. The other activity is designated 'posttransfer' editing and involves deacylation of mischarged Val-tRNA(Ile). This chain is Isoleucine--tRNA ligase, found in Dehalococcoides mccartyi (strain ATCC BAA-2266 / KCTC 15142 / 195) (Dehalococcoides ethenogenes (strain 195)).